Here is a 237-residue protein sequence, read N- to C-terminus: Concanavalin V (237 aa).

Residues Glu8 and Asp10 each coordinate Mn(2+). Ca(2+) contacts are provided by Asp10, Tyr12, Asn14, and Asp19. Asn14 serves as a coordination point for a carbohydrate. Mn(2+) is bound by residues Asp19 and His24. Residues Gly70, 98 to 100, Asp208, and Arg228 each bind a carbohydrate; that span reads GLY.

Belongs to the leguminous lectin family. Homotetramer. In terms of processing, concanavalin A-like lectins of the Diocleinae subtribe undergo proteolytic processing referred to as circular permutation. The propeptide is split into an N-terminal and a C-terminal part, the gamma and beta chain, respectively. These are then religated in beta-gamma order to form the mature alpha chain. The beta and gamma chains can often be detected in cell extracts. Residues 1-118 of the mature chain, as displayed here, probably constitute the beta chain in the propeptide, residues 119-237 the gamma chain.

D-mannose/D-glucose-binding lectin which binds alpha-methyl-D-mannoside, D-mannose and D-glucose in that order. Also binds to serum fetuin and ovalbumin. Has hemagglutinating activity towards rabbit erythrocytes. Is not toxic towards larvae of the brine shrimp Artemia. Induces relaxation in rat endothelized aorta. Shows a transient edematogenic effect in rat. This is Concanavalin V from Canavalia cathartica (Jackbean).